Consider the following 65-residue polypeptide: MLLSAVSFAKSKSKTILVKLVSQAGTGFSFNHKRSRLREKLSLLHYDPIVNKKVLFVEQKKIRSL.

Residues M1–F8 constitute a mitochondrion transit peptide.

It belongs to the bacterial ribosomal protein bL33 family. Component of the mitochondrial ribosome large subunit (39S) which comprises a 16S rRNA and about 50 distinct proteins.

It is found in the mitochondrion. The chain is Large ribosomal subunit protein bL33m (Mrpl33) from Mus musculus (Mouse).